A 276-amino-acid chain; its full sequence is uncharacterized protein (276 aa).

This sequence to E.cuniculi ECU05_1600/ECU11_0130.

This is an uncharacterized protein from Encephalitozoon cuniculi (strain GB-M1) (Microsporidian parasite).